The following is a 184-amino-acid chain: Putative DNA-directed RNA polymerase subunit 454R (184 aa).

Belongs to the archaeal Rpo5/eukaryotic RPB5 RNA polymerase subunit family.

Component of the DNA-dependent RNA polymerase that catalyzes the transcription in the cytoplasm of viral DNA into RNA using the four ribonucleoside triphosphates as substrates. In Invertebrate iridescent virus 6 (IIV-6), this protein is Putative DNA-directed RNA polymerase subunit 454R.